The following is a 729-amino-acid chain: Neurochondrin (729 aa).

Serine 2 carries the N-acetylserine modification. Residue serine 2 is modified to Phosphoserine. S-palmitoyl cysteine attachment occurs at residues cysteine 3 and cysteine 4. Arginine 75 is modified (asymmetric dimethylarginine). Serine 448 carries the post-translational modification Phosphoserine.

It belongs to the neurochondrin family. As to quaternary structure, interacts with MCHR1. Interacts with SEMA4C. Interacts with DIAPH1 (via FH3 domain). Interacts with GRM5. Post-translationally, palmitoylated. Palmitoylation by ZDHHC1, ZDHHC3 and ZDHHC11 regulates the association of NCDN with endosome membranes. May also be palmitoylated by ZDHHC7.

Its subcellular location is the cytoplasm. The protein localises to the cytosol. It is found in the endosome membrane. The protein resides in the cell projection. It localises to the dendrite. Its subcellular location is the postsynapse. Functionally, probably involved in signal transduction, in the nervous system, via increasing cell surface localization of GRM5 and positively regulating its signaling. Required for the spatial learning process. Acts as a negative regulator of Ca(2+)-calmodulin-dependent protein kinase 2 (CaMK2) phosphorylation. May play a role in modulating melanin-concentrating hormone-mediated functions via its interaction with MCHR1 that interferes with G protein-coupled signal transduction. May be involved in bone metabolism. May also be involved in neurite outgrowth. This chain is Neurochondrin (NCDN), found in Bos taurus (Bovine).